Here is a 533-residue protein sequence, read N- to C-terminus: Glucose-6-phosphate isomerase (533 aa).

Glu-341 acts as the Proton donor in catalysis. Catalysis depends on residues His-372 and Lys-501.

Belongs to the GPI family.

The protein localises to the cytoplasm. It catalyses the reaction alpha-D-glucose 6-phosphate = beta-D-fructose 6-phosphate. Its pathway is carbohydrate biosynthesis; gluconeogenesis. It participates in carbohydrate degradation; glycolysis; D-glyceraldehyde 3-phosphate and glycerone phosphate from D-glucose: step 2/4. In terms of biological role, catalyzes the reversible isomerization of glucose-6-phosphate to fructose-6-phosphate. In Cereibacter sphaeroides (strain ATCC 17025 / ATH 2.4.3) (Rhodobacter sphaeroides), this protein is Glucose-6-phosphate isomerase.